Consider the following 133-residue polypeptide: Ribosome-binding factor A (133 aa).

The protein belongs to the RbfA family. As to quaternary structure, monomer. Binds 30S ribosomal subunits, but not 50S ribosomal subunits or 70S ribosomes.

Its subcellular location is the cytoplasm. Functionally, one of several proteins that assist in the late maturation steps of the functional core of the 30S ribosomal subunit. Associates with free 30S ribosomal subunits (but not with 30S subunits that are part of 70S ribosomes or polysomes). Required for efficient processing of 16S rRNA. May interact with the 5'-terminal helix region of 16S rRNA. The chain is Ribosome-binding factor A from Chelativorans sp. (strain BNC1).